A 383-amino-acid chain; its full sequence is Proton extrusion protein PxcA (383 aa).

The next 4 membrane-spanning stretches (helical) occupy residues 163–183 (ILLLLILVPLLIQQVAGAYII), 258–278 (AVKNVFSDLSALIAFTVVCFA), 306–326 (IILFTDIFVGFHSPEGWTVLL), and 341–361 (FVMLFIATFPVILATIFKYWI).

The protein belongs to the CemA family.

The protein resides in the cell inner membrane. Functionally, required for H(+) efflux immediately after light irradiation to form a rapid H(+) concentration gradient across the thylakoid membranes. Together with PxcL, contributes to transient H(+) uptake following dark to light transition. The polypeptide is Proton extrusion protein PxcA (Synechococcus sp. (strain CC9902)).